The sequence spans 396 residues: Putative N(4)-(beta-N-acetylglucosaminyl)-L-asparaginase GE19290 (396 aa).

The signal sequence occupies residues 1–23 (MKRHLKACLWVLCFASTALSSLA). Cystine bridges form between cysteine 100-cysteine 105 and cysteine 199-cysteine 215. Threonine 246 functions as the Nucleophile in the catalytic mechanism. Residues 274–277 (RVGD) and 297–300 (TGDG) each bind substrate. Cysteines 357 and 384 form a disulfide.

It belongs to the Ntn-hydrolase family. As to quaternary structure, heterotetramer of two alpha and two beta chains arranged as a dimer of alpha/beta heterodimers. In terms of processing, cleaved into an alpha and beta chain by autocatalysis; this activates the enzyme. The N-terminal residue of the beta subunit is responsible for the nucleophile hydrolase activity.

It carries out the reaction N(4)-(beta-N-acetyl-D-glucosaminyl)-L-asparagine + H2O = N-acetyl-beta-D-glucosaminylamine + L-aspartate + H(+). Cleaves the GlcNAc-Asn bond which joins oligosaccharides to the peptide of asparagine-linked glycoproteins. The polypeptide is Putative N(4)-(beta-N-acetylglucosaminyl)-L-asparaginase GE19290 (Drosophila yakuba (Fruit fly)).